A 286-amino-acid chain; its full sequence is Energy-coupling factor transporter ATP-binding protein EcfA2 (286 aa).

Positions 3–244 constitute an ABC transporter domain; the sequence is IKVENVSFIY…AERLEKIGLS (242 aa). 40–47 lines the ATP pocket; it reads GHTGSGKS.

Belongs to the ABC transporter superfamily. Energy-coupling factor EcfA family. Forms a stable energy-coupling factor (ECF) transporter complex composed of 2 membrane-embedded substrate-binding proteins (S component), 2 ATP-binding proteins (A component) and 2 transmembrane proteins (T component).

It localises to the cell membrane. Functionally, ATP-binding (A) component of a common energy-coupling factor (ECF) ABC-transporter complex. Unlike classic ABC transporters this ECF transporter provides the energy necessary to transport a number of different substrates. In Caldanaerobacter subterraneus subsp. tengcongensis (strain DSM 15242 / JCM 11007 / NBRC 100824 / MB4) (Thermoanaerobacter tengcongensis), this protein is Energy-coupling factor transporter ATP-binding protein EcfA2.